The following is a 373-amino-acid chain: Glutamine synthetase (373 aa).

Ala-2 carries the N-acetylalanine modification. Residues 2 to 25 (ATSASSHLNKGIKQVYMSLPQGEK) form a required for glutamine-induced ubiquitination by CRL4(CRBN) and proteasomal degradation region. 2 positions are modified to N6-acetyllysine: Lys-11 and Lys-14. A GS beta-grasp domain is found at 24-106 (EKVQAMYIWI…VFCEVFKYNR (83 aa)). A Phosphotyrosine modification is found at Tyr-104. The GS catalytic domain maps to 113 to 373 (LRHTCKRIMD…TGDEPFQYKN (261 aa)). Glu-134 lines the ATP pocket. 4 residues coordinate Mn(2+): Glu-134, Glu-136, Glu-196, and Glu-203. 203–208 (EFQIGP) is a binding site for ATP. Residue 246–247 (NW) coordinates L-glutamate. A Mn(2+)-binding site is contributed by His-253. Residues 255–257 (NFS), Arg-319, and Arg-324 contribute to the ATP site. Arg-319 is a binding site for L-glutamate. 336–338 (YFE) contributes to the ADP binding site. Glu-338 is a Mn(2+) binding site. Residue Arg-340 coordinates L-glutamate. A Phosphoserine modification is found at Ser-343.

Belongs to the glutamine synthetase family. As to quaternary structure, decamer; composed of two pentamers. Interacts with PALMD. Interacts with RHOJ. Interacts with BEST2; this interaction tethers a fraction of GLUL to the membrane, causing a decrease of cytosolic glutamine synthase (GS) activity and inhibits the chloride channel activity of BEST2 by affecting the gating at the aperture in the absence of intracellular glutamate. Requires Mg(2+) as cofactor. It depends on Mn(2+) as a cofactor. Palmitoylated; undergoes autopalmitoylation. Post-translationally, acetylated by EP300/p300; acetylation is stimulated by increased glutamine levels and promotes ubiquitin-mediated proteasomal degradation. In terms of processing, ubiquitinated by ZNRF1. Ubiquitinated by the DCX (DDB1-CUL4-X-box) E3 ubiquitin-protein ligase complex called CRL4(CRBN), leading to proteasomal degradation.

The protein localises to the cytoplasm. Its subcellular location is the cytosol. The protein resides in the microsome. It localises to the mitochondrion. It is found in the cell membrane. It catalyses the reaction L-glutamate + NH4(+) + ATP = L-glutamine + ADP + phosphate + H(+). The catalysed reaction is L-cysteinyl-[protein] + hexadecanoyl-CoA = S-hexadecanoyl-L-cysteinyl-[protein] + CoA. Its activity is regulated as follows. Glutamine synthetase activity is inhibited by methionine sulfoximine (MSO). Its function is as follows. Glutamine synthetase that catalyzes the ATP-dependent conversion of glutamate and ammonia to glutamine. Its role depends on tissue localization: in the brain, it regulates the levels of toxic ammonia and converts neurotoxic glutamate to harmless glutamine, whereas in the liver, it is one of the enzymes responsible for the removal of ammonia. Plays a key role in ammonium detoxification during erythropoiesis: the glutamine synthetase activity is required to remove ammonium generated by porphobilinogen deaminase (HMBS) during heme biosynthesis to prevent ammonium accumulation and oxidative stress. Essential for proliferation of fetal skin fibroblasts. Independently of its glutamine synthetase activity, required for endothelial cell migration during vascular development. Involved in angiogenesis by regulating membrane localization and activation of the GTPase RHOJ, possibly by promoting RHOJ palmitoylation. May act as a palmitoyltransferase for RHOJ: able to autopalmitoylate and then transfer the palmitoyl group to RHOJ. Plays a role in ribosomal 40S subunit biogenesis. Through the interaction with BEST2, inhibits BEST2 channel activity by affecting the gating at the aperture in the absence of intracellular L-glutamate, but sensitizes BEST2 to intracellular L-glutamate, which promotes the opening of BEST2 and thus relieves its inhibitory effect on BEST2. The polypeptide is Glutamine synthetase (Canis lupus familiaris (Dog)).